The following is a 467-amino-acid chain: Uronate isomerase (467 aa).

It belongs to the metallo-dependent hydrolases superfamily. Uronate isomerase family.

It carries out the reaction D-glucuronate = D-fructuronate. The enzyme catalyses aldehydo-D-galacturonate = keto-D-tagaturonate. It functions in the pathway carbohydrate metabolism; pentose and glucuronate interconversion. This chain is Uronate isomerase, found in Actinobacillus succinogenes (strain ATCC 55618 / DSM 22257 / CCUG 43843 / 130Z).